We begin with the raw amino-acid sequence, 154 residues long: MNAQKGFTLIELMIVIAIIGILAAIALPAYQDYIARAQVSEAFTLADGLKTSISTNRQNGRCFADGKDTAADGVDIITGKYGKATILEENPNTADGLICGIYYEFNTTGVSDKLIGKTIALKADEKAGKLVLETVNSKTTNVENKYLPSAFKKP.

The propeptide at 1-6 is leader sequence; it reads MNAQKG. The residue at position 7 (phenylalanine 7) is an N-methylphenylalanine. Residues 7–29 form a helical membrane-spanning segment; the sequence is FTLIELMIVIAIIGILAAIALPA.

Belongs to the N-Me-Phe pilin family. The pili are polar flexible filaments of about 5.4 nanometers diameter and 2.5 micrometers average length; they consist of only a single polypeptide chain arranged in a helical configuration of five subunits per turn in the assembled pilus.

The protein localises to the fimbrium. It localises to the membrane. The chain is Fimbrial protein (tfpA) from Moraxella nonliquefaciens.